A 1192-amino-acid chain; its full sequence is Plakophilin-4 (1192 aa).

The interval 1-31 (MPAPEQASLVEEGQPQTRQEAASTGPGMEPE) is disordered. The stretch at 36 to 70 (TILASVKEQELQFQRLTRELEVERQIVASQLERCR) forms a coiled coil. A disordered region spans residues 73–262 (AESPSIASTS…PRPLNPSAYS (190 aa)). Phosphoserine is present on Ser75. Positions 77 to 86 (SIASTSSTEK) are enriched in polar residues. Phosphothreonine is present on Thr84. Phosphoserine is present on residues Ser106, Ser132, Ser136, and Ser139. 3 stretches are compositionally biased toward polar residues: residues 138–156 (GSLG…SDSG), 163–204 (FHNS…QPSV), and 214–230 (SVPS…STGV). Phosphoserine is present on residues Ser221, Ser231, and Ser236. The span at 231 to 242 (SPSRGSLRTSLG) shows a compositional bias: low complexity. Omega-N-methylarginine is present on residues Arg254 and Arg270. 2 positions are modified to phosphoserine: Ser273 and Ser281. Residues 290-310 (SVTSRQTSNPNGPTPQYQTTA) are disordered. A phosphoserine mark is found at Ser314, Ser327, and Ser337. The tract at residues 323 to 348 (TRVASPSQGQVGSSSPKRSGMTAVPQ) is disordered. Positions 325–338 (VASPSQGQVGSSSP) are enriched in low complexity. Position 372 is a phosphotyrosine (Tyr372). Phosphoserine occurs at positions 392, 403, and 406. Position 412 is a phosphothreonine (Thr412). The residue at position 415 (Tyr415) is a Phosphotyrosine. The ARM 1 repeat unit spans residues 415–455 (YEGRTYYSPVYRSPNHGTVELQGSQTALYRTGSVGIGNLQR). Residues Ser422, Ser427, and Ser438 each carry the phosphoserine modification. Tyr478 is modified (phosphotyrosine). Ser510, Ser512, and Ser515 each carry phosphoserine. ARM repeat units lie at residues 518–557 (KDPR…HLCF), 560–599 (NKVK…NLVF), 604–644 (DENK…NLSS), 660–702 (LTNT…NLSS), and 706–751 (EARK…NLSY). Positions 773-782 (GKESPSKDSE) are enriched in basic and acidic residues. A disordered region spans residues 773–810 (GKESPSKDSEPSCWGKKKKKKKRTPQEDQWDGVGPIPG). Position 776 is a phosphoserine (Ser776). ARM repeat units lie at residues 815–855 (PKGV…NLSA), 862–901 (AYIR…NMAL), and 950–993 (MENA…TLWQ). A phosphothreonine mark is found at Thr1013 and Thr1017. Position 1045 is a phosphoserine (Ser1045). Residues 1058–1086 (PRSEYDRTQPPMQYYNSQGDATHKGLYPG) are disordered. A compositionally biased stretch (polar residues) spans 1067 to 1077 (PPMQYYNSQGD). 3 positions are modified to phosphoserine: Ser1091, Ser1100, and Ser1135.

This sequence belongs to the beta-catenin family. As to quaternary structure, interacts with PDZD2. Interacts (via the C-terminus) with FRMPD2 (via the PDZ 2 domain). Interacts with RHOA; the interaction is detected at the midbody. Interacts with ECT2; the interaction is detected at the midbody. Interacts with CCDC85B. As to expression, expressed in salivary glands (at protein level). Expressed in arrector pili muscle (at protein level).

It localises to the cell junction. The protein localises to the desmosome. It is found in the cytoplasm. The protein resides in the cytoskeleton. Its subcellular location is the spindle. It localises to the midbody. The protein localises to the cell membrane. Plays a role as a regulator of Rho activity during cytokinesis. May play a role in junctional plaques. This is Plakophilin-4 (PKP4) from Homo sapiens (Human).